Reading from the N-terminus, the 151-residue chain is Deoxyuridine 5'-triphosphate nucleotidohydrolase (151 aa).

Residues 70 to 72 (RSG), Asn83, 87 to 89 (LID), and Met97 each bind substrate.

The protein belongs to the dUTPase family. Mg(2+) is required as a cofactor.

The catalysed reaction is dUTP + H2O = dUMP + diphosphate + H(+). Its pathway is pyrimidine metabolism; dUMP biosynthesis; dUMP from dCTP (dUTP route): step 2/2. In terms of biological role, this enzyme is involved in nucleotide metabolism: it produces dUMP, the immediate precursor of thymidine nucleotides and it decreases the intracellular concentration of dUTP so that uracil cannot be incorporated into DNA. The protein is Deoxyuridine 5'-triphosphate nucleotidohydrolase of Pasteurella multocida (strain Pm70).